The chain runs to 940 residues: MLLLLGLCLGLSQCVGSQEEAQSWGHSSEQDGLRVPRQVRLLQRLKTKPLMTEFSVKSTIISRYAFTTVSCRMLNRASEDQDVEFQMQIPAAAFITNFTMLIGEKVYQGEITEREKKSGDRVKEKRNKTTEENGEKGTEIFRASAVIPSKDKAAFFLSYEELLQRRLGKYEHSISVRPQQLSGRLSVDVNILESAGIASLEVLPLRNSRQRGSGRGEDDSGPPPSTVINQNETFANIIFKPTVVQQARIAQNGILGDFIIRYDVNREQSIGDIQVLNGYFVHYFAPKDLPPLPKNVVFVLDSSASMVGTKLRQTKDALFTILHDLRPQDHFSIIGFSNRIKVWKDHFDISHSRQHQGWQSVHSPYVAHWRHRHQRGLAEGHQAPQQVRGPQWHWRPERVPHCLPDGWEAHGRGDAHPQDPQQHPRGRPRPSLHLHIGIGNDVDFRLLEKLSLENCGLTRRVHEEEDAGSQLIGFYDEIRTPLLSDIRIDYPPSSVVQATKTLFPNYFNGSEIIIAGKLVDRKLDHLHVEVTASNSKKFVIPKTDVPVGPQKAGKDVTGSPRPGGDGERNPNHIERLWSYLTTKELLSSWLQSDDEPEKERLRQRAQALAVSYRFLTPFTSMKLRGPVPRTDGLKEAHGMSAAMGPEPVVQSVRGAGTQPGPLLKKPYQPRIKISKTSVDGDPHFVVDFPLSKLTVCFNIDGQPGDILRLVSDHMDSGVTVNGELIGAPPNGHKKQRTYFRTITILINKPERSYLEITPSRVILDGGDRLVLPCNQSVVVGSRGLEVSVSANANVTVTIQGSIAFVIPIHLYKKPAPFQRHHLGFYIANSEGLSSNCHGLLGQFLNQDARLTEDPAGPSQNLTHSLLLQVGEGPEAVLTVKGRQVPVVWKQRKIYNGEEQIDCWFARNNAAKLIDGEYKDYLASHPFDTGMTLGRGMSREL.

A signal peptide spans 1 to 16; that stretch reads MLLLLGLCLGLSQCVG. Positions 35–161 constitute a VIT domain; sequence VPRQVRLLQR…KAAFFLSYEE (127 aa). Residues Asn97 and Asn127 are each glycosylated (N-linked (GlcNAc...) asparagine). Disordered regions lie at residues 117–136 and 208–227; these read KSGD…NGEK and SRQR…PSTV. Asn231 carries an N-linked (GlcNAc...) asparagine glycan. Positions 295–478 constitute a VWFA domain; sequence NVVFVLDSSA…SQLIGFYDEI (184 aa). The segment at 405-432 is disordered; sequence DGWEAHGRGDAHPQDPQQHPRGRPRPSL. The span at 407–417 shows a compositional bias: basic and acidic residues; that stretch reads WEAHGRGDAHP. Asn508 carries N-linked (GlcNAc...) asparagine glycosylation. A disordered region spans residues 541-571; sequence PKTDVPVGPQKAGKDVTGSPRPGGDGERNPN. 3 N-linked (GlcNAc...) asparagine glycosylation sites follow: Asn774, Asn793, and Asn860.

Belongs to the ITIH family.

The protein resides in the secreted. May act as a tumor suppressor. The polypeptide is Inter-alpha-trypsin inhibitor heavy chain H5 (ITIH5) (Pongo abelii (Sumatran orangutan)).